The following is a 794-amino-acid chain: Hyaluronan mediated motility receptor (794 aa).

The tract at residues 1 to 87 is disordered; sequence MSFPKAPLKR…SQKNDKDVKR (87 aa). Residue Ser20 is modified to Phosphoserine. Residues 74 to 87 show a composition bias toward basic and acidic residues; that stretch reads SKKDSQKNDKDVKR. Residues Asn134, Asn279, Asn446, Asn467, Asn488, Asn509, Asn530, Asn561, and Asn601 are each glycosylated (N-linked (GlcNAc...) asparagine). Residues 365 to 630 form a required for interaction with FAM83D region; it reads EEMTSEKNVF…ITDLKNQLRQ (266 aa). Tandem repeats lie at residues 442-462, 463-483, 484-504, 505-525, and 526-546. The interval 442 to 546 is 5 X 21 AA tandem repeats; sequence QEKYNDTAQS…RDVTAQLESY (105 aa). Hyaluronic acid-binding stretches follow at residues 719–729 and 741–750; these read KQKIKHVVKLK and KLRSQLVKRK. Position 784 is a phosphothreonine (Thr784).

Interacts with ANKRD26. Interacts with DYNLL1. Interacts with FAM83D/CHICA. As to expression, ubiquitously expressed.

Its subcellular location is the cell surface. The protein localises to the cytoplasm. The protein resides in the cytoskeleton. It is found in the spindle. Receptor for hyaluronic acid (HA). Involved in cell motility. When hyaluronan binds to HMMR, the phosphorylation of a number of proteins, including the PTK2/FAK1 occurs. May also be involved in cellular transformation and metastasis formation, and in regulating extracellular-regulated kinase (ERK) activity. May act as a regulator of adipogenesis. In Mus musculus (Mouse), this protein is Hyaluronan mediated motility receptor (Hmmr).